A 247-amino-acid chain; its full sequence is tRNA pseudouridine synthase A (247 aa).

The Nucleophile role is filled by Asp52. A substrate-binding site is contributed by Tyr113.

Belongs to the tRNA pseudouridine synthase TruA family. As to quaternary structure, homodimer.

It catalyses the reaction uridine(38/39/40) in tRNA = pseudouridine(38/39/40) in tRNA. In terms of biological role, formation of pseudouridine at positions 38, 39 and 40 in the anticodon stem and loop of transfer RNAs. In Bartonella quintana (strain Toulouse) (Rochalimaea quintana), this protein is tRNA pseudouridine synthase A.